Reading from the N-terminus, the 416-residue chain is Serine hydroxymethyltransferase 1 (416 aa).

(6S)-5,6,7,8-tetrahydrofolate-binding positions include L121 and 125 to 127 (GHL). K229 is subject to N6-(pyridoxal phosphate)lysine. (6S)-5,6,7,8-tetrahydrofolate contacts are provided by residues E245 and 354–356 (SPF).

It belongs to the SHMT family. Homodimer. Pyridoxal 5'-phosphate is required as a cofactor.

The protein localises to the cytoplasm. The catalysed reaction is (6R)-5,10-methylene-5,6,7,8-tetrahydrofolate + glycine + H2O = (6S)-5,6,7,8-tetrahydrofolate + L-serine. It functions in the pathway one-carbon metabolism; tetrahydrofolate interconversion. The protein operates within amino-acid biosynthesis; glycine biosynthesis; glycine from L-serine: step 1/1. Functionally, catalyzes the reversible interconversion of serine and glycine with tetrahydrofolate (THF) serving as the one-carbon carrier. This reaction serves as the major source of one-carbon groups required for the biosynthesis of purines, thymidylate, methionine, and other important biomolecules. Also exhibits THF-independent aldolase activity toward beta-hydroxyamino acids, producing glycine and aldehydes, via a retro-aldol mechanism. This Photobacterium profundum (strain SS9) protein is Serine hydroxymethyltransferase 1.